The following is a 517-amino-acid chain: MAAPEQPLAISRGCTSSSSLSPPRGDRTLLVRHLPAELTAEEKEDLLKYFGAQSVRVLSDKGRLKHTAFATFPNEKAAIKALTRLHQLKLLGHTLVVEFAKEQDRVHSPCPTSGSEKKKRSDDPVEDDKEKKELGYLTVENGIAPNHGLTFPLNSCLKYMYPPPSSTILANIVNALASVPKFYVQVLHLMNKMNLPTPFGPITARPPMYEDYMPLHAPLPPTSPQPPEEPPLPDEDEELSSEESEYESTDDEDRQRMNKLMELANLQPKRPKTIKQRHVRKKRKIKDMLNTPLCPSHSSLHPVLLPSDVFDQPQPVGNKRIEFHISTDMPAAFKKDLEKEQNCEEKNHDLPATEVDASNIGFGKIFPKPNLDITEEIKEDSDEMPSECISRRELEKGRISREEMETLSVFRSYEPGEPNCRIYVKNLAKHVQEKDLKYIFGRYVDFSSETQRIMFDIRLMKEGRMKGQAFIGLPNEKAAAKALKEANGYVLFGKPMVVQFARSARPKQDPKEGKRKC.

The segment at methionine 1 to aspartate 26 is disordered. The necessary for interaction with PDCD7 stretch occupies residues methionine 1–methionine 257. Serine 21 carries the post-translational modification Phosphoserine. Positions arginine 27–glutamate 102 constitute an RRM 1 domain. Disordered stretches follow at residues valine 106–glutamate 130 and methionine 213–arginine 254. Serine 108 is subject to Phosphoserine. Residues serine 115 to glutamate 130 show a composition bias toward basic and acidic residues. Residues aspartate 211–aspartate 380 are necessary for binding to m(7)G-capped U12 snRNA. Positions alanine 217–proline 230 are enriched in pro residues. Over residues proline 231–glutamate 252 the composition is skewed to acidic residues. Positions cysteine 420–serine 503 constitute an RRM 2 domain.

As to quaternary structure, component of the U11/U12 snRNPs that are part of the U12-type spliceosome. Found in a complex with m(7)G-capped U12 snRNA. Interacts with PDCD7. As to expression, highly expressed in pancreas and kidney. Detected at lower levels in heart, brain, placenta, lung, liver, spleen, thymus, prostate, testis, ovary, small intestine, colon and leukocytes.

It localises to the nucleus. Functionally, participates in pre-mRNA U12-dependent splicing, performed by the minor spliceosome which removes U12-type introns. U12-type introns comprises less than 1% of all non-coding sequences. Binds to the 3'-stem-loop of m(7)G-capped U12 snRNA. The protein is RNA-binding region-containing protein 3 (RNPC3) of Homo sapiens (Human).